Reading from the N-terminus, the 297-residue chain is Tyrosine recombinase XerD (297 aa).

The region spanning 1 to 86 (MNDLIEDFLH…SLRSFFHYLM (86 aa)) is the Core-binding (CB) domain. Residues 107-291 (GLPKVLNLDD…TKLRLKDVYK (185 aa)) form the Tyr recombinase domain. Catalysis depends on residues Arg147, Lys171, His243, Arg246, and His269. The O-(3'-phospho-DNA)-tyrosine intermediate role is filled by Tyr278.

The protein belongs to the 'phage' integrase family. XerD subfamily. In terms of assembly, forms a cyclic heterotetrameric complex composed of two molecules of XerC and two molecules of XerD.

It localises to the cytoplasm. In terms of biological role, site-specific tyrosine recombinase, which acts by catalyzing the cutting and rejoining of the recombining DNA molecules. The XerC-XerD complex is essential to convert dimers of the bacterial chromosome into monomers to permit their segregation at cell division. It also contributes to the segregational stability of plasmids. This chain is Tyrosine recombinase XerD, found in Listeria monocytogenes serovar 1/2a (strain ATCC BAA-679 / EGD-e).